The chain runs to 323 residues: Pyruvate dehydrogenase E1 component subunit beta (323 aa).

Residue glutamate 60 coordinates thiamine diphosphate. Residues isoleucine 113, alanine 161, isoleucine 162, aspartate 164, and asparagine 166 each contribute to the K(+) site.

In terms of assembly, heterodimer of an alpha and a beta chain. Thiamine diphosphate is required as a cofactor.

The protein localises to the plastid. Its subcellular location is the chloroplast. The enzyme catalyses N(6)-[(R)-lipoyl]-L-lysyl-[protein] + pyruvate + H(+) = N(6)-[(R)-S(8)-acetyldihydrolipoyl]-L-lysyl-[protein] + CO2. Functionally, the pyruvate dehydrogenase complex catalyzes the overall conversion of pyruvate to acetyl-CoA and CO(2). It contains multiple copies of three enzymatic components: pyruvate dehydrogenase (E1), dihydrolipoamide acetyltransferase (E2) and lipoamide dehydrogenase (E3). The sequence is that of Pyruvate dehydrogenase E1 component subunit beta (pdhB) from Gracilaria tenuistipitata var. liui (Red alga).